The following is a 40-amino-acid chain: Conotoxin Bt14.16 (40 aa).

The propeptide occupies 1 to 18 (SDGRDAAVIYTESDVIAR). 2 disulfides stabilise this stretch: Cys21–Cys36 and Cys24–Cys29.

This sequence belongs to the conotoxin A superfamily. In terms of tissue distribution, expressed by the venom duct.

The protein localises to the secreted. Functionally, probable neurotoxin with unknown target. Possibly targets ion channels. This chain is Conotoxin Bt14.16, found in Conus betulinus (Beech cone).